A 228-amino-acid polypeptide reads, in one-letter code: PKHD-type hydroxylase XCV3086 (228 aa).

One can recognise a Fe2OG dioxygenase domain in the interval 78 to 180; it reads RIYPPLFNRY…RVACFFWTQS (103 aa). Fe cation-binding residues include His96, Asp98, and His161. Arg171 lines the 2-oxoglutarate pocket.

The cofactor is Fe(2+). L-ascorbate is required as a cofactor.

The sequence is that of PKHD-type hydroxylase XCV3086 from Xanthomonas euvesicatoria pv. vesicatoria (strain 85-10) (Xanthomonas campestris pv. vesicatoria).